The following is a 112-amino-acid chain: Integration host factor subunit alpha (112 aa).

This sequence belongs to the bacterial histone-like protein family. In terms of assembly, heterodimer of an alpha and a beta chain.

This protein is one of the two subunits of integration host factor, a specific DNA-binding protein that functions in genetic recombination as well as in transcriptional and translational control. In Allorhizobium ampelinum (strain ATCC BAA-846 / DSM 112012 / S4) (Agrobacterium vitis (strain S4)), this protein is Integration host factor subunit alpha.